Reading from the N-terminus, the 310-residue chain is Malate dehydrogenase (310 aa).

NAD(+) contacts are provided by residues 7–12 (GAGNVG) and D32. Substrate-binding residues include R81 and R87. Residues N94 and 117-119 (VSN) contribute to the NAD(+) site. Substrate-binding residues include N119 and R150. The active-site Proton acceptor is the H174.

Belongs to the LDH/MDH superfamily. MDH type 3 family. As to quaternary structure, homotetramer; arranged as a dimer of dimers.

It carries out the reaction (S)-malate + NAD(+) = oxaloacetate + NADH + H(+). Functionally, catalyzes the reversible oxidation of malate to oxaloacetate. The protein is Malate dehydrogenase of Prosthecochloris vibrioformis (Chlorobium vibrioforme).